The primary structure comprises 345 residues: 3-dehydroquinate synthase (345 aa).

This sequence belongs to the archaeal-type DHQ synthase family.

It carries out the reaction 2-amino-2,3,7-trideoxy-D-lyxo-hept-6-ulosonate + NAD(+) + H2O = 3-dehydroquinate + NH4(+) + NADH + H(+). Its function is as follows. Catalyzes the oxidative deamination and cyclization of 2-amino-3,7-dideoxy-D-threo-hept-6-ulosonic acid (ADH) to yield 3-dehydroquinate (DHQ), which is fed into the canonical shikimic pathway of aromatic amino acid biosynthesis. This is 3-dehydroquinate synthase from Methanocorpusculum labreanum (strain ATCC 43576 / DSM 4855 / Z).